The chain runs to 407 residues: Semenogelin-2 (407 aa).

The N-terminal stretch at 1–23 is a signal peptide; that stretch reads MKSIILFVLSLVLILEKQAAVMG. 4 disordered regions span residues 25–60, 133–158, 173–192, and 272–407; these read KDGS…TKSK, GQAH…LSSQ, KEQA…GSQS, and NLNQ…NKIS. Composition is skewed to polar residues over residues 31 to 40, 137 to 158, and 174 to 192; these read QLPSGSSQFP, CGTQ…LSSQ, and EQAS…GSQS. Residues 292–310 show a composition bias toward basic and acidic residues; the sequence is RTEERQLNHGEKSVQKDVS. The span at 325–334 shows a compositional bias: polar residues; sequence KSQNQVTIHS. Positions 335-345 are enriched in basic and acidic residues; it reads QDQEHGHKENK. Over residues 372–397 the composition is skewed to polar residues; sequence GSISIQTEEQIHGKSQNXVRIPSQAQ.

Belongs to the semenogelin family. Interacts with SERPINA5.

It localises to the secreted. Functionally, participates in the formation of a gel matrix (sperm coagulum) entrapping the accessory gland secretions and ejaculated spermatozoa. This is Semenogelin-2 (SEMG2) from Pan troglodytes (Chimpanzee).